Reading from the N-terminus, the 52-residue chain is Transcriptional regulator SlrA (52 aa).

A Sin domain is found at 1–38; it reads MKTHVKKDLDKGWHMLIQEARSIGLGIHDVRQFLESET.

Component of the SlrR/SlrA complex.

Its function is as follows. Required specifically for induction of eps and yqxM operons by antagonizing SinR. Regulates SlrR activity. Controls the initiation of biofilm formation. The protein is Transcriptional regulator SlrA (slrA) of Bacillus subtilis (strain 168).